A 267-amino-acid chain; its full sequence is Putative carbamate hydrolase RutD (267 aa).

Positions 14–115 (PVMVMISGLG…SALVIINGWL (102 aa)) constitute an AB hydrolase-1 domain.

It belongs to the AB hydrolase superfamily. Hydrolase RutD family.

It carries out the reaction carbamate + 2 H(+) = NH4(+) + CO2. In terms of biological role, involved in pyrimidine catabolism. May facilitate the hydrolysis of carbamate, a reaction that can also occur spontaneously. In Cronobacter turicensis (strain DSM 18703 / CCUG 55852 / LMG 23827 / z3032), this protein is Putative carbamate hydrolase RutD.